The primary structure comprises 75 residues: Large ribosomal subunit protein bL31 (75 aa).

Residues Cys16, Cys18, Cys37, and Cys40 each coordinate Zn(2+).

The protein belongs to the bacterial ribosomal protein bL31 family. Type A subfamily. In terms of assembly, part of the 50S ribosomal subunit. Zn(2+) serves as cofactor.

Binds the 23S rRNA. The polypeptide is Large ribosomal subunit protein bL31 (Nitrosospira multiformis (strain ATCC 25196 / NCIMB 11849 / C 71)).